Here is a 423-residue protein sequence, read N- to C-terminus: MPKVTFSGSAPTLGVHAPPALDPRQPASPPPAASNGTHARGFSPPADMPTWSGTEGVRFDFNDGCRVLLPDGDWTVRLRDMHTDTPLFDAQIGAGVVTSTRKHFVPFLIEIDAGGRRVFKHLFDAHGKPVLIQFEAQRLGEALGWFGYAVKFQRQHRCKLTCSMPAPLIALLRPGYPDIEFVTPELVKPECYYATYRLGRFAGDEAHAYQPSAPQLVGAHRSAAYMLGVDPREAPPRIELTDDSRPLAGPYVCIAAQSALRCARWERPGGWRELQRFLTAAGYRIVCVDSPSPDVADESSALADVAYSLAPDTPWTERARWLRHAACLIGVPGDLSWLAWAVGAPVVLISGFTHPVSEFDTPYRVINSHACNSCWNDASANFDDADASSCPRHAGTLRQFECARLVSVEQIKRTIRSIPGIAC.

Positions 1–10 (MPKVTFSGSA) are enriched in polar residues. Residues 1–49 (MPKVTFSGSAPTLGVHAPPALDPRQPASPPPAASNGTHARGFSPPADMP) form a disordered region. Residues Cys371, Cys374, Cys390, and Cys402 each coordinate Fe(3+).

Belongs to the glycosyltransferase 9 family. Homotrimer or homotetramer. Fe(3+) is required as a cofactor.

It is found in the cell inner membrane. The protein resides in the cytoplasm. Its function is as follows. Iron-binding protein which is required for the asymmetric polar distribution of the autotransporter BimA on the bacterial surface prior to its translocation into bacterial periplasm. Lacks heptosyltransferase activity. This is Inactive autotransporter heptosyltransferase BimC from Burkholderia thailandensis (strain ATCC 700388 / DSM 13276 / CCUG 48851 / CIP 106301 / E264).